Reading from the N-terminus, the 613-residue chain is 4-hydroxy-3-methylbut-2-en-1-yl diphosphate synthase (flavodoxin) (613 aa).

[4Fe-4S] cluster-binding residues include C514, C517, C548, and E555.

Belongs to the IspG family. The cofactor is [4Fe-4S] cluster.

The enzyme catalyses (2E)-4-hydroxy-3-methylbut-2-enyl diphosphate + oxidized [flavodoxin] + H2O + 2 H(+) = 2-C-methyl-D-erythritol 2,4-cyclic diphosphate + reduced [flavodoxin]. It functions in the pathway isoprenoid biosynthesis; isopentenyl diphosphate biosynthesis via DXP pathway; isopentenyl diphosphate from 1-deoxy-D-xylulose 5-phosphate: step 5/6. Converts 2C-methyl-D-erythritol 2,4-cyclodiphosphate (ME-2,4cPP) into 1-hydroxy-2-methyl-2-(E)-butenyl 4-diphosphate. This Chlamydia pneumoniae (Chlamydophila pneumoniae) protein is 4-hydroxy-3-methylbut-2-en-1-yl diphosphate synthase (flavodoxin).